The following is a 97-amino-acid chain: Aspartyl/glutamyl-tRNA(Asn/Gln) amidotransferase subunit C (97 aa).

Belongs to the GatC family. As to quaternary structure, heterotrimer of A, B and C subunits.

The enzyme catalyses L-glutamyl-tRNA(Gln) + L-glutamine + ATP + H2O = L-glutaminyl-tRNA(Gln) + L-glutamate + ADP + phosphate + H(+). The catalysed reaction is L-aspartyl-tRNA(Asn) + L-glutamine + ATP + H2O = L-asparaginyl-tRNA(Asn) + L-glutamate + ADP + phosphate + 2 H(+). Allows the formation of correctly charged Asn-tRNA(Asn) or Gln-tRNA(Gln) through the transamidation of misacylated Asp-tRNA(Asn) or Glu-tRNA(Gln) in organisms which lack either or both of asparaginyl-tRNA or glutaminyl-tRNA synthetases. The reaction takes place in the presence of glutamine and ATP through an activated phospho-Asp-tRNA(Asn) or phospho-Glu-tRNA(Gln). The polypeptide is Aspartyl/glutamyl-tRNA(Asn/Gln) amidotransferase subunit C (Prochlorococcus marinus (strain AS9601)).